The chain runs to 552 residues: MRSDIVKKGFEKAPQRSLFKAMGYTDEEIRRPLIAVVNSWNEVVPGHIHLDKIAEAVKAGIRLAGATPMEFNVIGVCDGIAMGHIGMKYSLITRELIADSIEAMVMAHQFDGMVLIPNCDKIVPGMLMAAARVNIPSILISGGPMLAGRVDNKVCDLNSVFEAVGAYSAGKITDEELFALEENACPGCGSCSGMFTANTMNCLSEVLGMALPGNGTIPAVMAARIRLAKMAGMKIVELVERDIKPSDILTIEAFENALTVDMALGGSTNTILHLPAIANELGIKLNLDIINDISDKTPNLCKLSPAGHYHIEDLYFAGGVQAVMNELSKKGLIHLDLLTVTGKSVGENIKDAKVKDYNVIRPIDNPYSETGGLVIVRGNLAPDGAVVKKSAVPPKLMRHRGPARVFESGEEVFEAILKGKIQKGDVIVIRYEGPKGGPGMREMLSPTSALAGVGLIEDVALITDGRFSGATRGACFGHVSPEAAERGPIAAVQDGDIISIDIENKTLTLEVPEEEIKRRLESLGPFEPKVKKGYLYRYSKLVRSASTGAILE.

Residue Asp-78 participates in Mg(2+) binding. Cys-119 lines the [2Fe-2S] cluster pocket. Residues Asp-120 and Lys-121 each coordinate Mg(2+). An N6-carboxylysine modification is found at Lys-121. Position 191 (Cys-191) interacts with [2Fe-2S] cluster. Residue Glu-442 coordinates Mg(2+). Ser-468 functions as the Proton acceptor in the catalytic mechanism.

It belongs to the IlvD/Edd family. As to quaternary structure, homodimer. The cofactor is [2Fe-2S] cluster. Mg(2+) is required as a cofactor.

The enzyme catalyses (2R)-2,3-dihydroxy-3-methylbutanoate = 3-methyl-2-oxobutanoate + H2O. It catalyses the reaction (2R,3R)-2,3-dihydroxy-3-methylpentanoate = (S)-3-methyl-2-oxopentanoate + H2O. The protein operates within amino-acid biosynthesis; L-isoleucine biosynthesis; L-isoleucine from 2-oxobutanoate: step 3/4. It participates in amino-acid biosynthesis; L-valine biosynthesis; L-valine from pyruvate: step 3/4. Functions in the biosynthesis of branched-chain amino acids. Catalyzes the dehydration of (2R,3R)-2,3-dihydroxy-3-methylpentanoate (2,3-dihydroxy-3-methylvalerate) into 2-oxo-3-methylpentanoate (2-oxo-3-methylvalerate) and of (2R)-2,3-dihydroxy-3-methylbutanoate (2,3-dihydroxyisovalerate) into 2-oxo-3-methylbutanoate (2-oxoisovalerate), the penultimate precursor to L-isoleucine and L-valine, respectively. The chain is Dihydroxy-acid dehydratase from Caldicellulosiruptor saccharolyticus (strain ATCC 43494 / DSM 8903 / Tp8T 6331).